Reading from the N-terminus, the 146-residue chain is NADH-quinone oxidoreductase subunit A (146 aa).

The next 3 membrane-spanning stretches (helical) occupy residues 8–28 (FGSVFVFLLLGVIFVVGGYLT), 63–83 (FYVVALIFIIFDVEVVFLYPW), and 93–113 (FALIEVLVFAGILILGLAYAW).

It belongs to the complex I subunit 3 family. NDH-1 is composed of 14 different subunits. Subunits NuoA, H, J, K, L, M, N constitute the membrane sector of the complex.

The protein localises to the cell inner membrane. It catalyses the reaction a quinone + NADH + 5 H(+)(in) = a quinol + NAD(+) + 4 H(+)(out). Functionally, NDH-1 shuttles electrons from NADH, via FMN and iron-sulfur (Fe-S) centers, to quinones in the respiratory chain. The immediate electron acceptor for the enzyme in this species is believed to be a menaquinone. Couples the redox reaction to proton translocation (for every two electrons transferred, four hydrogen ions are translocated across the cytoplasmic membrane), and thus conserves the redox energy in a proton gradient. The chain is NADH-quinone oxidoreductase subunit A from Chlorobium chlorochromatii (strain CaD3).